The primary structure comprises 153 residues: Ribosome maturation factor RimP (153 aa).

The protein belongs to the RimP family.

It localises to the cytoplasm. Its function is as follows. Required for maturation of 30S ribosomal subunits. The polypeptide is Ribosome maturation factor RimP (Nostoc punctiforme (strain ATCC 29133 / PCC 73102)).